Here is a 322-residue protein sequence, read N- to C-terminus: GATA transcription factor 8 (322 aa).

The disordered stretch occupies residues Thr-93–Cys-168. Over residues Phe-102–Leu-141 the composition is skewed to low complexity. Residues Lys-144 to Arg-154 are compositionally biased toward basic residues. The short motif at Arg-147–Arg-154 is the Nuclear localization signal element. The GATA-type zinc-finger motif lies at Gln-225–Pro-279.

It belongs to the type IV zinc-finger family. Class A subfamily.

The protein localises to the nucleus. Transcriptional activator that specifically binds 5'-GATA-3' or 5'-GAT-3' motifs within gene promoters. May be involved in the regulation of some light-responsive genes. This Arabidopsis thaliana (Mouse-ear cress) protein is GATA transcription factor 8 (GATA8).